Reading from the N-terminus, the 591-residue chain is Aspartate--tRNA(Asp/Asn) ligase (591 aa).

Glu175 lines the L-aspartate pocket. The segment at 199-202 (QQFK) is aspartate. Arg221 and His453 together coordinate L-aspartate. 221–223 (RDE) is an ATP binding site. Glu486 is a binding site for ATP. Arg493 is a binding site for L-aspartate. An ATP-binding site is contributed by 538-541 (GIDR).

The protein belongs to the class-II aminoacyl-tRNA synthetase family. Type 1 subfamily. Homodimer.

The protein resides in the cytoplasm. It catalyses the reaction tRNA(Asx) + L-aspartate + ATP = L-aspartyl-tRNA(Asx) + AMP + diphosphate. In terms of biological role, aspartyl-tRNA synthetase with relaxed tRNA specificity since it is able to aspartylate not only its cognate tRNA(Asp) but also tRNA(Asn). Reaction proceeds in two steps: L-aspartate is first activated by ATP to form Asp-AMP and then transferred to the acceptor end of tRNA(Asp/Asn). The polypeptide is Aspartate--tRNA(Asp/Asn) ligase (Paracoccus denitrificans (strain Pd 1222)).